The sequence spans 182 residues: Flagellar transcriptional regulator FlhC (182 aa).

4 residues coordinate Zn(2+): Cys-138, Cys-141, Cys-158, and Cys-161.

This sequence belongs to the FlhC family. In terms of assembly, heterohexamer composed of two FlhC and four FlhD subunits. Each FlhC binds a FlhD dimer, forming a heterotrimer, and a hexamer assembles by dimerization of two heterotrimers. The cofactor is Zn(2+).

The protein resides in the cytoplasm. Its function is as follows. Functions in complex with FlhD as a master transcriptional regulator that regulates transcription of several flagellar and non-flagellar operons by binding to their promoter region. Activates expression of class 2 flagellar genes, including fliA, which is a flagellum-specific sigma factor that turns on the class 3 genes. Also regulates genes whose products function in a variety of physiological pathways. This Gallionella capsiferriformans (strain ES-2) (Gallionella ferruginea capsiferriformans (strain ES-2)) protein is Flagellar transcriptional regulator FlhC.